The primary structure comprises 206 residues: Ras-related protein Ral-B (206 aa).

21–29 (GSGGVGKSA) contacts GTP. Positions 43–51 (YEPTKADSY) match the Effector region motif. GTP-binding positions include 68–72 (DTAGQ), 128–131 (NKSD), and 158–160 (SAK). Basic and acidic residues predominate over residues 180-189 (KMSENKDKNG). The interval 180–206 (KMSENKDKNGKKSSKNKKSFKERCCLL) is disordered. Cysteine 203 is modified (cysteine methyl ester). Cysteine 203 carries S-geranylgeranyl cysteine lipidation. Positions 204–206 (CLL) are cleaved as a propeptide — removed in mature form.

This sequence belongs to the small GTPase superfamily. Ras family. As to quaternary structure, interacts with EXOC2/Sec5 and EXOC8/Exo84. Interacts (via effector domain) with RALBP1. Post-translationally, prenylation is essential for membrane localization. In terms of processing, the farnesylated form confers resistance to the proapoptotic and anti-anchorage-dependent growth effects of some geranylgeranyltransferase I inhibitors.

The protein localises to the cell membrane. The protein resides in the midbody. The catalysed reaction is GTP + H2O = GDP + phosphate + H(+). Its activity is regulated as follows. Alternates between an inactive form bound to GDP and an active form bound to GTP. Activated by a guanine nucleotide-exchange factor (GEF) and inactivated by a GTPase-activating protein (GAP). Functionally, multifunctional GTPase involved in a variety of cellular processes including gene expression, cell migration, cell proliferation, oncogenic transformation and membrane trafficking. Accomplishes its multiple functions by interacting with distinct downstream effectors. Acts as a GTP sensor for GTP-dependent exocytosis of dense core vesicles. Required both to stabilize the assembly of the exocyst complex and to localize functional exocyst complexes to the leading edge of migrating cells. Required for suppression of apoptosis. In late stages of cytokinesis, upon completion of the bridge formation between dividing cells, mediates exocyst recruitment to the midbody to drive abscission. Involved in ligand-dependent receptor mediated endocytosis of the EGF and insulin receptors. The sequence is that of Ras-related protein Ral-B (RALB) from Pongo abelii (Sumatran orangutan).